A 206-amino-acid chain; its full sequence is Small ribosomal subunit protein uS4 (206 aa).

Positions 96 to 158 (SRLDNVVYRM…AKKQLRIQNA (63 aa)) constitute an S4 RNA-binding domain.

It belongs to the universal ribosomal protein uS4 family. Part of the 30S ribosomal subunit. Contacts protein S5. The interaction surface between S4 and S5 is involved in control of translational fidelity.

In terms of biological role, one of the primary rRNA binding proteins, it binds directly to 16S rRNA where it nucleates assembly of the body of the 30S subunit. Its function is as follows. With S5 and S12 plays an important role in translational accuracy. In Francisella tularensis subsp. tularensis (strain FSC 198), this protein is Small ribosomal subunit protein uS4.